Here is a 219-residue protein sequence, read N- to C-terminus: Histone H1.4 (219 aa).

Over residues 1 to 15 the composition is skewed to low complexity; the sequence is MSETAPAAPAAPAPA. Residues 1-41 form a disordered region; the sequence is MSETAPAAPAAPAPAEKTPVKKKARKSAGAAKRKASGPPVS. Ser2 is modified (N-acetylserine). Ser2 bears the Phosphoserine mark. N6-acetyllysine is present on Lys17. Position 18 is a phosphothreonine (Thr18). Positions 20-35 are enriched in basic residues; sequence VKKKARKSAGAAKRKA. Lys26 is modified (N6-acetyllysine; alternate). Residue Lys26 is modified to N6-methyllysine; alternate. The residue at position 34 (Lys34) is an N6-(beta-hydroxybutyryl)lysine; alternate. Lys34 carries the post-translational modification N6-succinyllysine; alternate. Residue Ser36 is modified to Phosphoserine. One can recognise an H15 domain in the interval 36-109; it reads SGPPVSELIT…GASGSFKLNK (74 aa). The residue at position 52 (Lys52) is an N6-(beta-hydroxybutyryl)lysine. Arg54 is modified (citrulline). Residues Lys64, Lys85, Lys90, and Lys106 each carry the N6-(beta-hydroxybutyryl)lysine modification. Residues 91 to 219 form a disordered region; that stretch reads GTLVQTKGTG…KPKKAPAKKK (129 aa). Positions 119–140 are enriched in basic residues; it reads KPKKAGAAKPKKPAGAAKKPKK. Thr146 carries the phosphothreonine modification. 2 stretches are compositionally biased toward basic residues: residues 149–160 and 168–185; these read KGAKKTPKKAKK and KKAKSPKKAKAAKPKKAP. The residue at position 187 (Ser187) is a Phosphoserine. The span at 192–219 shows a compositional bias: basic residues; it reads KAVKPKAAKPKAAKPKTAKPKKAPAKKK.

The protein belongs to the histone H1/H5 family. In terms of processing, H1 histones are progressively phosphorylated during the cell cycle, becoming maximally phosphorylated during late G2 phase and M phase, and being dephosphorylated sharply thereafter. Post-translationally, acetylated at Lys-26. Deacetylated at Lys-26 by SIRT1. Citrullination at Arg-54 (H1R54ci) by PADI4 takes place within the DNA-binding site of H1 and results in its displacement from chromatin and global chromatin decondensation, thereby promoting pluripotency and stem cell maintenance.

The protein resides in the nucleus. It localises to the chromosome. Histone H1 protein binds to linker DNA between nucleosomes forming the macromolecular structure known as the chromatin fiber. Histones H1 are necessary for the condensation of nucleosome chains into higher-order structured fibers. Also acts as a regulator of individual gene transcription through chromatin remodeling, nucleosome spacing and DNA methylation. The sequence is that of Histone H1.4 from Oryctolagus cuniculus (Rabbit).